The chain runs to 314 residues: Ornithine carbamoyltransferase (314 aa).

Carbamoyl phosphate-binding positions include 61-64 (STRT), Gln88, Arg112, and 139-142 (HPCQ). Residues Asn170, Asp234, and 238–239 (SM) each bind L-ornithine. Residues 274 to 275 (CL) and Arg302 each bind carbamoyl phosphate.

The protein belongs to the aspartate/ornithine carbamoyltransferase superfamily. OTCase family.

The protein resides in the cytoplasm. The catalysed reaction is carbamoyl phosphate + L-ornithine = L-citrulline + phosphate + H(+). Its pathway is amino-acid biosynthesis; L-arginine biosynthesis; L-arginine from L-ornithine and carbamoyl phosphate: step 1/3. Reversibly catalyzes the transfer of the carbamoyl group from carbamoyl phosphate (CP) to the N(epsilon) atom of ornithine (ORN) to produce L-citrulline. The protein is Ornithine carbamoyltransferase of Anoxybacillus flavithermus (strain DSM 21510 / WK1).